Reading from the N-terminus, the 297-residue chain is Zinc finger protein 784 (297 aa).

Pro residues predominate over residues 1-12; the sequence is MAAARPDPPIPS. The interval 1 to 39 is disordered; the sequence is MAAARPDPPIPSSPTRESPSPEPPDLVLVPDGRPVTPPG. The residue at position 13 (S13) is a Phosphoserine. 3 consecutive C2H2-type zinc fingers follow at residues 64–86, 100–122, and 128–150; these read FHCA…EHGH, SRCH…YSLH, and YRCS…QHRH. Positions 149–175 are disordered; it reads RHGVEPGTSERLLPTTTTGQPNSRVAQ. A compositionally biased stretch (polar residues) spans 162–173; sequence PTTTTGQPNSRV. 3 consecutive C2H2-type zinc fingers follow at residues 195-217, 223-245, and 251-273; these read FACR…ERVH, YHCS…ARIH, and FRCM…QRTH. The disordered stretch occupies residues 268-297; it reads KHQRTHFHGPGSGVGESRGQLRSSSVSQES. The segment covering 287–297 has biased composition (polar residues); the sequence is QLRSSSVSQES.

Belongs to the krueppel C2H2-type zinc-finger protein family.

The protein localises to the nucleus. Functionally, may be involved in transcriptional regulation. The polypeptide is Zinc finger protein 784 (Znf784) (Mus musculus (Mouse)).